The sequence spans 328 residues: G2/mitotic-specific cyclin-2 (328 aa).

Belongs to the cyclin family. Cyclin AB subfamily. Interacts with the CDC2 protein kinase to form a serine/threonine kinase holoenzyme complex also known as maturation promoting factor (MPF). The cyclin subunit imparts substrate specificity to the complex. As to expression, only expressed in organs with dividing cells.

In terms of biological role, essential for the control of the cell cycle at the G2/M (mitosis) transition. The protein is G2/mitotic-specific cyclin-2 of Medicago sativa (Alfalfa).